The sequence spans 141 residues: Hemoglobin subunit alpha-A/Q/R/T (141 aa).

The Globin domain maps to 1 to 141 (VLSPADKTNV…VSTVLTSKYR (141 aa)). Ser-3 carries the post-translational modification Phosphoserine. Lys-7 carries the post-translational modification N6-succinyllysine. Thr-8 is subject to Phosphothreonine. Lys-11 carries the post-translational modification N6-succinyllysine. N6-acetyllysine; alternate is present on Lys-16. N6-succinyllysine; alternate is present on Lys-16. Residue Tyr-24 is modified to Phosphotyrosine. Ser-35 is subject to Phosphoserine. The residue at position 40 (Lys-40) is an N6-succinyllysine. Ser-49 carries the phosphoserine modification. His-58 contacts O2. His-87 contacts heme b. Position 102 is a phosphoserine (Ser-102). Thr-108 is modified (phosphothreonine). A phosphoserine mark is found at Ser-124 and Ser-131. Phosphothreonine is present on residues Thr-134 and Thr-137. At Ser-138 the chain carries Phosphoserine.

Belongs to the globin family. In terms of assembly, heterotetramer of two alpha chains and two beta chains. In terms of tissue distribution, red blood cells.

Its function is as follows. Involved in oxygen transport from the lung to the various peripheral tissues. This Macaca fascicularis (Crab-eating macaque) protein is Hemoglobin subunit alpha-A/Q/R/T.